The primary structure comprises 186 residues: Ribosome-recycling factor (186 aa).

The protein belongs to the RRF family.

It localises to the cytoplasm. In terms of biological role, responsible for the release of ribosomes from messenger RNA at the termination of protein biosynthesis. May increase the efficiency of translation by recycling ribosomes from one round of translation to another. The polypeptide is Ribosome-recycling factor (Paraburkholderia phymatum (strain DSM 17167 / CIP 108236 / LMG 21445 / STM815) (Burkholderia phymatum)).